We begin with the raw amino-acid sequence, 182 residues long: CDP-diacylglycerol--glycerol-3-phosphate 3-phosphatidyltransferase (182 aa).

Residues 1-12 (MQLNIPTWLTLF) lie on the Cytoplasmic side of the membrane. A helical membrane pass occupies residues 13–37 (RVVLIPFFVLAFYLPFVWAPMVCAI). Residues 38–60 (IFVFAAATDWFDGFLARRWKQTT) are Periplasmic-facing. The chain crosses the membrane as a helical span at residues 61–81 (RFGAFLDPVADKVMVAIALVL). Topologically, residues 82–86 (VAEHY) are cytoplasmic. The helical transmembrane segment at 87–107 (HVWWITLPAATMIAREIIISS) threads the bilayer. Topologically, residues 108–145 (LREWMAEIGKRSSVAVSWIGKVKTTAQMGSLVGLLWRP) are periplasmic. The chain crosses the membrane as a helical span at residues 146-168 (DHNIELASFVLLYIAAVLTFWSM). Residues 169–181 (FQYLNAAWKDLLE) lie on the Cytoplasmic side of the membrane.

This sequence belongs to the CDP-alcohol phosphatidyltransferase class-I family.

It is found in the cell inner membrane. The enzyme catalyses a CDP-1,2-diacyl-sn-glycerol + sn-glycerol 3-phosphate = a 1,2-diacyl-sn-glycero-3-phospho-(1'-sn-glycero-3'-phosphate) + CMP + H(+). It participates in phospholipid metabolism; phosphatidylglycerol biosynthesis; phosphatidylglycerol from CDP-diacylglycerol: step 1/2. Functionally, catalyzes the conversion of cytidine diphosphate diacylglycerol (CDP-DG) and glycerol 3-phosphate into phosphatidylglycerol. Essential for the synthesis of anionic phospholipids, thereby playing a role in balancing the ratio of zwitterionic and anionic phospholipids, which is thought to be important for normal membrane function. In Yersinia enterocolitica serotype O:8 / biotype 1B (strain NCTC 13174 / 8081), this protein is CDP-diacylglycerol--glycerol-3-phosphate 3-phosphatidyltransferase.